We begin with the raw amino-acid sequence, 394 residues long: Guanine nucleotide-binding protein G(s) subunit alpha (394 aa).

The segment at 1-23 (MGCLGNSKTEDQRNEEKAQREAN) is disordered. G2 carries N-palmitoyl glycine lipidation. A lipid anchor (S-palmitoyl cysteine) is attached at C3. Basic and acidic residues predominate over residues 8 to 23 (KTEDQRNEEKAQREAN). In terms of domain architecture, G-alpha spans 39–394 (ATHRLLLLGA…RMHLRQYELL (356 aa)). The segment at 42 to 55 (RLLLLGAGESGKST) is G1 motif. Residue 47–55 (GAGESGKST) coordinates GTP. S54 is a binding site for Mg(2+). Residues 68-91 (FNGEGGEEDPQAARSNSDGEKATK) form a disordered region. The G2 motif stretch occupies residues 196–204 (DLLRCRVLT). Residues 197 to 204 (LLRCRVLT), 223 to 227 (DVGGQ), 292 to 295 (NKQD), and A366 each bind GTP. T204 contacts Mg(2+). Residues 219 to 228 (FHMFDVGGQR) form a G3 motif region. The tract at residues 288-295 (ILFLNKQD) is G4 motif. Positions 364–369 (TCAVDT) are G5 motif.

Belongs to the G-alpha family. G(s) subfamily. Heterotrimeric G proteins are composed of 3 units; alpha, beta and gamma. The alpha chain contains the guanine nucleotide binding site. Interacts with CRY1; the interaction may block GPCR-mediated regulation of cAMP concentrations. Interacts with ADCY6 and stimulates its adenylyl cyclase activity. Interacts with ADCY2 and ADCY5. Stimulates the ADCY5 adenylyl cyclase activity. Interaction with SASH1.

The protein resides in the cell membrane. Its function is as follows. Guanine nucleotide-binding proteins (G proteins) function as transducers in numerous signaling pathways controlled by G protein-coupled receptors (GPCRs). Signaling involves the activation of adenylyl cyclases, resulting in increased levels of the signaling molecule cAMP. GNAS functions downstream of several GPCRs, including beta-adrenergic receptors. Stimulates the Ras signaling pathway via RAPGEF2. The protein is Guanine nucleotide-binding protein G(s) subunit alpha (GNAS) of Canis lupus familiaris (Dog).